A 141-amino-acid chain; its full sequence is Large ribosomal subunit protein uL11 (141 aa).

Belongs to the universal ribosomal protein uL11 family. As to quaternary structure, part of the ribosomal stalk of the 50S ribosomal subunit. Interacts with L10 and the large rRNA to form the base of the stalk. L10 forms an elongated spine to which L12 dimers bind in a sequential fashion forming a multimeric L10(L12)X complex. Post-translationally, one or more lysine residues are methylated.

In terms of biological role, forms part of the ribosomal stalk which helps the ribosome interact with GTP-bound translation factors. The protein is Large ribosomal subunit protein uL11 of Streptococcus mutans serotype c (strain ATCC 700610 / UA159).